We begin with the raw amino-acid sequence, 166 residues long: Large ribosomal subunit protein uL10 (166 aa).

It belongs to the universal ribosomal protein uL10 family. Part of the ribosomal stalk of the 50S ribosomal subunit. The N-terminus interacts with L11 and the large rRNA to form the base of the stalk. The C-terminus forms an elongated spine to which L12 dimers bind in a sequential fashion forming a multimeric L10(L12)X complex.

Its function is as follows. Forms part of the ribosomal stalk, playing a central role in the interaction of the ribosome with GTP-bound translation factors. This Bacillus mycoides (strain KBAB4) (Bacillus weihenstephanensis) protein is Large ribosomal subunit protein uL10.